The chain runs to 120 residues: Cell division protein FtsL (120 aa).

Residues 1 to 36 (MTNLAVKYKQQAQEEVQIQTPPQQMAKPKVKAKITR) are Cytoplasmic-facing. Residues 37–57 (IEKLLYVAFIGFLLYACVAFI) form a helical membrane-spanning segment. Topologically, residues 58 to 120 (GNKAGLYQVN…INANNVKGLK (63 aa)) are extracellular.

Belongs to the FtsL family.

Its subcellular location is the cell membrane. Its function is as follows. Essential cell division protein. The chain is Cell division protein FtsL from Bacillus cereus (strain ATCC 14579 / DSM 31 / CCUG 7414 / JCM 2152 / NBRC 15305 / NCIMB 9373 / NCTC 2599 / NRRL B-3711).